We begin with the raw amino-acid sequence, 89 residues long: Small ribosomal subunit protein uS15 (89 aa).

Positions 1 to 23 are disordered; it reads MSLGTEEKQNLINTHQVHPTDTG. The segment covering 10–23 has biased composition (polar residues); that stretch reads NLINTHQVHPTDTG.

Belongs to the universal ribosomal protein uS15 family. As to quaternary structure, part of the 30S ribosomal subunit. Forms a bridge to the 50S subunit in the 70S ribosome, contacting the 23S rRNA.

One of the primary rRNA binding proteins, it binds directly to 16S rRNA where it helps nucleate assembly of the platform of the 30S subunit by binding and bridging several RNA helices of the 16S rRNA. Its function is as follows. Forms an intersubunit bridge (bridge B4) with the 23S rRNA of the 50S subunit in the ribosome. The polypeptide is Small ribosomal subunit protein uS15 (Prochlorococcus marinus (strain NATL2A)).